The following is a 218-amino-acid chain: Ribose-5-phosphate isomerase A (218 aa).

Residues 28 to 31, 81 to 84, and 94 to 97 each bind substrate; these read TGST, DGAD, and KGGG. The active-site Proton acceptor is E103. K121 serves as a coordination point for substrate.

It belongs to the ribose 5-phosphate isomerase family. As to quaternary structure, homodimer.

The enzyme catalyses aldehydo-D-ribose 5-phosphate = D-ribulose 5-phosphate. It functions in the pathway carbohydrate degradation; pentose phosphate pathway; D-ribose 5-phosphate from D-ribulose 5-phosphate (non-oxidative stage): step 1/1. Its function is as follows. Catalyzes the reversible conversion of ribose-5-phosphate to ribulose 5-phosphate. This is Ribose-5-phosphate isomerase A from Aliivibrio fischeri (strain ATCC 700601 / ES114) (Vibrio fischeri).